Reading from the N-terminus, the 577-residue chain is Protein GPR108 (577 aa).

The N-terminal stretch at 1–34 (MAVSERRGLSGESPAQCRWEYLSLLVLMLSGCSG) is a signal peptide. 2 N-linked (GlcNAc...) asparagine glycosylation sites follow: asparagine 59 and asparagine 111. Positions 144–224 (LLPEAPSQSG…TRGPSGKEKD (81 aa)) are disordered. 2 N-linked (GlcNAc...) asparagine glycosylation sites follow: asparagine 233 and asparagine 237. 7 helical membrane-spanning segments follow: residues 296–316 (LYLI…SVLC), 325–345 (IHWL…FHSI), 369–389 (LLKG…WAFV), 400–420 (IFGI…VIES), 434–454 (ILFL…VWSI), 482–502 (VMVI…RVAV), and 506–526 (WQWL…VLTG).

It belongs to the LU7TM family.

The protein localises to the golgi apparatus. The protein resides in the cis-Golgi network membrane. It is found in the trans-Golgi network membrane. Its subcellular location is the golgi apparatus membrane. Functionally, may play a role in intracellular immune modulation by activating NF-kappaB response and attenuating Toll-like-receptor response. The sequence is that of Protein GPR108 (Gpr108) from Rattus norvegicus (Rat).